Reading from the N-terminus, the 629-residue chain is Natural resistance-associated macrophage protein 2 homolog (629 aa).

Residues 1-151 (MNNNNNNKKL…KSKFSIKKLK (151 aa)) are Cytoplasmic-facing. The tract at residues 50–119 (NVVNGSIEDS…SDIDSSGDSI (70 aa)) is disordered. The segment covering 62 to 85 (QQQQQQQQQQQQQQQQQQQQQQQQ) has biased composition (low complexity). A compositionally biased stretch (basic and acidic residues) spans 96–105 (DKPFQDRDSN). The segment covering 106 to 118 (IGDGSDIDSSGDS) has biased composition (low complexity). The chain crosses the membrane as a helical span at residues 152–172 (SFLGPALFISVGYMDPGNWAT). Topologically, residues 173–182 (DLEGGSRFGY) are extracellular. The helical transmembrane segment at 183–203 (QLMWVLLFSNIMALFLQTLVI) threads the bilayer. Residues 204-224 (KLALVTKNDLAQQCRKEYSKT) lie on the Cytoplasmic side of the membrane. A helical membrane pass occupies residues 225-245 (VNIFLWLILELAIISTDLAEV). The Extracellular segment spans residues 246–253 (IGTAIGLN). A helical membrane pass occupies residues 254 to 274 (ILFGLPLIAGVAITSLDTLLF). The Cytoplasmic segment spans residues 275–286 (LAIQRWGIRKLE). The chain crosses the membrane as a helical span at residues 287 to 307 (LLILLLLSMITMCFVIELFLS). The Extracellular portion of the chain corresponds to 308–326 (KPIASEVFSGFVPRLNSDS). A helical transmembrane segment spans residues 327-347 (VMVATGIVGATTMPHNLFLHG). Over 348–376 (SVVKSRKIPNDRRKSVIKQAYRYNVIDTV) the chain is Cytoplasmic. Residues 377–397 (LALNCAFFVNIAILMLAASVF) form a helical membrane-spanning segment. The Extracellular segment spans residues 398-421 (WKSNIQVTELSEAYRLLTKLMDGK). Residues 422–442 (LAAVLFGLGLFLAGQSSTITG) traverse the membrane as a helical segment. The Cytoplasmic portion of the chain corresponds to 443 to 468 (TMAGQIVMEGFIKLRIKPWLRRFITR). A helical membrane pass occupies residues 469–489 (LLAIIPAAIVIIVLGDKGTYT). Residues 490-491 (LL) are Extracellular-facing. A helical transmembrane segment spans residues 492 to 512 (IISQVLLSIGLPFAVVPLIIF). The Cytoplasmic portion of the chain corresponds to 513–527 (TSSYEIMGEFKNRLS). Residues 528–548 (IIIINSIIALFIIGLNLATIF) traverse the membrane as a helical segment. The Extracellular segment spans residues 549–565 (QLINDFLHNDSIISKCL). N-linked (GlcNAc...) asparagine glycosylation is present at N557. Residues 566–586 (TIIFLIPLSIALCCLLLWLII) form a helical membrane-spanning segment. At 587–629 (SKINFFTNLLSKIFNNNNNNNNKNIINNNNNYSGNTINNQTIQ) the chain is on the cytoplasmic side.

This sequence belongs to the NRAMP family.

It is found in the cell membrane. In terms of biological role, divalent transition metal (iron and manganese) transporter. The protein is Natural resistance-associated macrophage protein 2 homolog (nramp2) of Dictyostelium discoideum (Social amoeba).